Consider the following 1581-residue polypeptide: Maestro heat-like repeat-containing protein family member 2B (1581 aa).

HEAT repeat units follow at residues 123–160 (FMMM…SIYK), 305–342 (ANPV…AEEP), 401–441 (MSNR…LVIG), 464–501 (DYLF…KLPS), 526–543 (AIGL…KLAE), 544–580 (MWKT…SLWK), 658–695 (ENHL…LTKT), 773–815 (TYKE…LKPA), 960–997 (CQEV…KFIP), 1017–1055 (PLCT…HMPV), 1112–1150 (KLMR…TGAH), 1153–1191 (HLYP…LGER), 1254–1291 (GVIL…EPIL), 1295–1332 (GNLR…GAPH), 1359–1379 (CESL…DINF), and 1380–1416 (YFKE…LTGR).

Found in a complex at least composed of MROH2B isoform 2, PRKACA isoform 2 and TCP11. Interacts with PRKACA isoform 2. Interacts with TCP11. Post-translationally, constitutively phosphorylated on serine and threonine residues in acrosomal region of the sperm head, midpiece and flagellar regions of noncapacitated spermatozoa. Phosphorylation on tyrosine residues increases upon sperm capacitation within the acrosomal and tail regions in a protein kinase A (PKA)-dependent signaling pathway. As to expression, expressed strongly in round spermatids and fully mature spermatozoa. Expressed weakly in pachytene spermatocytes (at protein level). Isoform 2 is specifically expressed in the testis. Isoform 2 is expressed in pachytene spermatocytes and round spermatids. Isoform 3 is weakly expressed in testis.

The protein resides in the cytoplasm. Its subcellular location is the cytoplasmic vesicle. The protein localises to the secretory vesicle. It is found in the acrosome. It localises to the cell projection. The protein resides in the cilium. Its subcellular location is the flagellum. May play a role in the process of sperm capacitation. This is Maestro heat-like repeat-containing protein family member 2B from Mus musculus (Mouse).